Reading from the N-terminus, the 577-residue chain is Efflux pump notK' (577 aa).

Residues N62 and N84 are each glycosylated (N-linked (GlcNAc...) asparagine). Transmembrane regions (helical) follow at residues 104–124 (AAIASVASFFLGLLANLPVAL), 151–171 (LAVTAVFVEGWIFLGLTMLGI), 189–209 (AGIGLYLTLIGLSYSAGLGLV), 241–261 (NPTMWIGIFCGGFFTVFLMMY), and 265–285 (GAVIAGILLVSIISWPRTTPV). N320 is a glycosylation site (N-linked (GlcNAc...) asparagine). 5 consecutive transmembrane segments (helical) span residues 328–348 (FGLALITFLYVDILDATGTLY), 373–393 (VDAICISIGSLFGSPPVTAFV), 413–433 (GICFFIAVFFAPIFASIPPWA), 434–454 (TGSTLVIVGSMMMHATLEINW), and 476–496 (IADGLIAGIISYILINGGVWV). Low complexity predominate over residues 555-566 (MPPNGSMSSGSP). The disordered stretch occupies residues 555-577 (MPPNGSMSSGSPEQVAEKAVGKY). N558 is a glycosylation site (N-linked (GlcNAc...) asparagine).

It belongs to the nucleobase:cation symporter-2 (NCS2) (TC 2.A.40) family. Azg-like subfamily.

It localises to the cell membrane. Its function is as follows. Efflux pump; part of the gene cluster that mediates the biosynthesis of notoamide, a fungal indole alkaloid that belongs to a family of natural products containing a characteristic bicyclo[2.2.2]diazaoctane core. The protein is Efflux pump notK' of Aspergillus versicolor.